The following is a 475-amino-acid chain: TOM1-like protein 1 (475 aa).

The 133-residue stretch at 22–154 (ATFAGVQTED…DLLKKGVQFP (133 aa)) folds into the VHS domain. The tract at residues 155–175 (PLDGEPETKQEAGQISPSRPT) is disordered. A compositionally biased stretch (polar residues) spans 165-175 (EAGQISPSRPT). S170 carries the post-translational modification Phosphoserine. A GAT domain is found at 199 to 287 (EQIGKLHSEL…AILGYERFTR (89 aa)). A disordered region spans residues 296 to 317 (KRNPTEANQTSSEPSAPSCDLL). Positions 300 to 310 (TEANQTSSEPS) are enriched in polar residues. A Phosphoserine modification is found at S313. Residues 392–395 (YDNF) are interaction with GRB2. Residues 421–425 (LPPLP) carry the SH3-binding motif. The interaction with PIK3R1 stretch occupies residues 442–445 (YEVM). Y458 carries the post-translational modification Phosphotyrosine. Positions 458-461 (YEEI) match the SH2-binding motif.

Belongs to the TOM1 family. As to quaternary structure, interacts with the SH2 and SH3 domains of FYN when phosphorylated. Also interacts with GRB2 and PIK3R1 when phosphorylated. Interacts with LYN. Phosphorylated on tyrosines by FYN and LYN.

The protein resides in the golgi apparatus. It localises to the golgi stack. It is found in the endosome membrane. Its subcellular location is the cytoplasm. The protein localises to the membrane. Functionally, probable adapter protein involved in signaling pathways. Interacts with the SH2 and SH3 domains of various signaling proteins when it is phosphorylated. May promote FYN activation, possibly by disrupting intramolecular SH3-dependent interactions. This Rattus norvegicus (Rat) protein is TOM1-like protein 1 (Tom1l1).